A 229-amino-acid polypeptide reads, in one-letter code: MASSSLSPATQLGSSRSALMAMSSGLFVKPTKMNHQMVRKEKIGLRISCQASSIPADRVPDMEKRKTLNLLLLGALSLPTGYMLVPYATFFVPPGTGGGGGGTPAKDALGNDVVAAEWLKTHGPGDRTLTQGLKGDPTYLVVENDKTLATYGINAVCTHLGCVVPWNKAENKFLCPCHGSQYNAQGRVVRGPAPLSLALAHADIDEAGKVLFVPWVETDFRTGDAPWWS.

The transit peptide at 1 to 50 (MASSSLSPATQLGSSRSALMAMSSGLFVKPTKMNHQMVRKEKIGLRISCQ) directs the protein to the chloroplast. The chain crosses the membrane as a helical span at residues 68–90 (LNLLLLGALSLPTGYMLVPYATF). Residues 115 to 211 (AAEWLKTHGP…ADIDEAGKVL (97 aa)) enclose the Rieske domain. [2Fe-2S] cluster is bound by residues cysteine 157, histidine 159, cysteine 175, and histidine 178. Cysteine 162 and cysteine 177 are oxidised to a cystine. Serine 196 is modified (phosphoserine).

This sequence belongs to the Rieske iron-sulfur protein family. As to quaternary structure, the 4 large subunits of the cytochrome b6-f complex are cytochrome b6, subunit IV (17 kDa polypeptide, petD), cytochrome f and the Rieske protein, while the 4 small subunits are petG, petL, petM and petN. The complex functions as a dimer. Interacts with PGRL1A. Component of a mitochondrial large protein complex that contains, at least, MIC60, DGS1, TOM40, TOM20 proteins, and petC/RISP. It depends on [2Fe-2S] cluster as a cofactor. Confined to photosynthetic tissues, with highest levels in flowers. In leaves, mostly localized in mesophyll cells. In stems, confined to the peripheral ring of chlorenchyma and adjoining groups of cells associated with the vascular bundles. In siliques, present in green wall of the fruit and in peduncle but not in the translucide white septum of the seeds.

Its subcellular location is the plastid. It is found in the chloroplast thylakoid membrane. The protein localises to the mitochondrion inner membrane. It catalyses the reaction 2 oxidized [plastocyanin] + a plastoquinol + 2 H(+)(in) = 2 reduced [plastocyanin] + a plastoquinone + 4 H(+)(out). Functionally, essential protein for photoautotrophism. Confers resistance to photo-oxidative damages by contributing to the thermal dissipation of light energy and to lumenal acidification (increase of pH gradient). Component of the cytochrome b6-f complex, which mediates electron transfer between photosystem II (PSII) and photosystem I (PSI), cyclic electron flow around PSI, and state transitions. The protein is Cytochrome b6-f complex iron-sulfur subunit, chloroplastic of Arabidopsis thaliana (Mouse-ear cress).